We begin with the raw amino-acid sequence, 267 residues long: Hydroxyethylthiazole kinase (267 aa).

Residue M48 participates in substrate binding. Positions 124 and 170 each coordinate ATP. G197 is a binding site for substrate.

Belongs to the Thz kinase family. Mg(2+) is required as a cofactor.

The enzyme catalyses 5-(2-hydroxyethyl)-4-methylthiazole + ATP = 4-methyl-5-(2-phosphooxyethyl)-thiazole + ADP + H(+). It functions in the pathway cofactor biosynthesis; thiamine diphosphate biosynthesis; 4-methyl-5-(2-phosphoethyl)-thiazole from 5-(2-hydroxyethyl)-4-methylthiazole: step 1/1. Its function is as follows. Catalyzes the phosphorylation of the hydroxyl group of 4-methyl-5-beta-hydroxyethylthiazole (THZ). This chain is Hydroxyethylthiazole kinase, found in Leptospira biflexa serovar Patoc (strain Patoc 1 / Ames).